We begin with the raw amino-acid sequence, 686 residues long: Hexamerin 70c (686 aa).

An N-terminal signal peptide occupies residues 1 to 19 (MLSKVVLLVALAAICGAQG). Residues 32-155 (FLHKQKKIFD…IAVLYRPDTK (124 aa)) form the Hemocyanin N-terminal domain. The 271-residue stretch at 161–431 (AIYEIYPNYF…MLYQNILSYF (271 aa)) folds into the Hemocyanin middle domain. N205 and N662 each carry an N-linked (GlcNAc...) asparagine glycan. The region spanning 440–676 (QYSQSELQMP…NMYFKDVFIY (237 aa)) is the Hemocyanin C-terminal domain.

This sequence belongs to the hemocyanin/hexamerin family. Probable homohexamer. Expressed in the fat body and secreted into the hemolymph (at protein level). Present in trophocytes and oenocytes of the fat body (at protein level). Not expressed in ovary or testis.

It is found in the secreted. The protein localises to the nucleus. It localises to the cytoplasm. Its subcellular location is the cytoplasmic granule. Functionally, storage protein that may function as a nutrient supply to compensate for lack of dietary proteins during metamorphosis and egg production. The protein is Hexamerin 70c of Apis mellifera (Honeybee).